Here is a 110-residue protein sequence, read N- to C-terminus: Large ribosomal subunit protein uL22 (110 aa).

It belongs to the universal ribosomal protein uL22 family. Part of the 50S ribosomal subunit.

Functionally, this protein binds specifically to 23S rRNA; its binding is stimulated by other ribosomal proteins, e.g. L4, L17, and L20. It is important during the early stages of 50S assembly. It makes multiple contacts with different domains of the 23S rRNA in the assembled 50S subunit and ribosome. The globular domain of the protein is located near the polypeptide exit tunnel on the outside of the subunit, while an extended beta-hairpin is found that lines the wall of the exit tunnel in the center of the 70S ribosome. In Vibrio cholerae serotype O1 (strain ATCC 39541 / Classical Ogawa 395 / O395), this protein is Large ribosomal subunit protein uL22.